We begin with the raw amino-acid sequence, 1961 residues long: Myosin-9 (1961 aa).

Residue A2 is modified to N-acetylalanine. Residues 2–838 are mediates interaction with LIMCH1; that stretch reads AQQAADKYLY…RLFTKVKPLL (837 aa). K8 is modified (N6-acetyllysine). The residue at position 11 (Y11) is a Phosphotyrosine. The Myosin N-terminal SH3-like domain maps to 27-77; the sequence is GAKKLVWVPSTKNGFEPASLKEEVGEEAIVELVENGKKVKVNKDDIQKMNP. In terms of domain architecture, Myosin motor spans 81-776; sequence SKVEDMAELT…VLAHLEEERD (696 aa). An N6-acetyllysine modification is found at K102. 174-181 lines the ATP pocket; sequence GESGAGKT. An N6-acetyllysine mark is found at K299, K435, and K613. S628 is subject to Phosphoserine. Positions 654-676 are actin-binding; that stretch reads LAKLMATLRNTNPNFVCCIIPNH. Position 754 is a phosphotyrosine (Y754). The 30-residue stretch at 779–808 folds into the IQ domain; that stretch reads ITDVIIGFQACCRGYLARKAFAKRQQQLTA. Residues 841 to 1927 adopt a coiled-coil conformation; it reads IRHEDELLAK…LKNKLRRGDM (1087 aa). K850 carries the N6-succinyllysine modification. N6-acetyllysine is present on residues K860, K975, and K1024. Positions 1035–1055 are enriched in basic and acidic residues; sequence RLRREEKQRQELEKTRRKLEG. The interval 1035 to 1057 is disordered; sequence RLRREEKQRQELEKTRRKLEGDS. Position 1114 is a phosphoserine (S1114). K1234 and K1249 each carry N6-acetyllysine. The disordered stretch occupies residues 1331-1353; it reads LKQMEDEKNSFREQLEEEEEEAK. A compositionally biased stretch (basic and acidic residues) spans 1332–1344; sequence KQMEDEKNSFREQ. N6-acetyllysine occurs at positions 1358, 1393, 1405, 1411, 1460, and 1639. At K1670 the chain carries N6-succinyllysine. Position 1715 is a phosphoserine (S1715). An N6-acetyllysine mark is found at K1794, K1803, and K1846. Residues 1878–1910 form a disordered region; that stretch reads RQLEEAEEEAQRANASRRKLQRELEDATETADA. Omega-N-methylarginine is present on R1924. Residues 1938-1961 are disordered; the sequence is KGTGDCSDEEVDGKADGADAKATE. S1944 carries the phosphoserine modification. Over residues 1949–1961 the composition is skewed to basic and acidic residues; it reads DGKADGADAKATE.

Belongs to the TRAFAC class myosin-kinesin ATPase superfamily. Myosin family. As to quaternary structure, myosin is a hexameric protein that consists of 2 heavy chain subunits (MHC), 2 alkali light chain subunits (MLC) and 2 regulatory light chain subunits (MLC-2). Interacts with RASIP1. Interacts with DDR1. Interacts with PDLIM2. Interacts with SVIL. Interacts with HTRA3. Interacts with Myo7a. Interacts with CFAP95. Interacts with LIMCH1; independently of the integration of MYH9 into the myosin complex. Interacts with RAB3A. Interacts with ZBED4. Interacts with S100A4; this interaction increases cell motility. Post-translationally, ISGylated. In terms of processing, ubiquitination.

It localises to the cytoplasm. Its subcellular location is the cytoskeleton. It is found in the cell cortex. The protein resides in the cytoplasmic vesicle. The protein localises to the secretory vesicle. It localises to the cortical granule. Cellular myosin that appears to play a role in cytokinesis, cell shape, and specialized functions such as secretion and capping. Required for cortical actin clearance prior to oocyte exocytosis. Promotes cell motility in conjunction with S100A4. During cell spreading, plays an important role in cytoskeleton reorganization, focal contact formation (in the margins but not the central part of spreading cells), and lamellipodial retraction; this function is mechanically antagonized by MYH10. In Rattus norvegicus (Rat), this protein is Myosin-9 (Myh9).